Here is an 897-residue protein sequence, read N- to C-terminus: Beta-galactosidase (897 aa).

The active-site Proton donor is Glu-459. The active-site Nucleophile is the Glu-525.

Belongs to the glycosyl hydrolase 2 family.

The enzyme catalyses Hydrolysis of terminal non-reducing beta-D-galactose residues in beta-D-galactosides.. The chain is Beta-galactosidase (cbgA) from Clostridium acetobutylicum.